Reading from the N-terminus, the 397-residue chain is Elongation factor Tu (397 aa).

In terms of domain architecture, tr-type G spans 10 to 206 (KPHVNVGTIG…TMDTYFPQPE (197 aa)). The segment at 19 to 26 (GHVDHGKT) is G1. Residue 19-26 (GHVDHGKT) participates in GTP binding. A Mg(2+)-binding site is contributed by Thr-26. The tract at residues 60–64 (GITIA) is G2. Residues 81–84 (DCPG) are G3. Residues 81–85 (DCPGH) and 136–139 (NKAD) contribute to the GTP site. The G4 stretch occupies residues 136-139 (NKAD). The tract at residues 174–176 (SAL) is G5.

It belongs to the TRAFAC class translation factor GTPase superfamily. Classic translation factor GTPase family. EF-Tu/EF-1A subfamily. As to quaternary structure, monomer.

Its subcellular location is the cytoplasm. The enzyme catalyses GTP + H2O = GDP + phosphate + H(+). GTP hydrolase that promotes the GTP-dependent binding of aminoacyl-tRNA to the A-site of ribosomes during protein biosynthesis. This is Elongation factor Tu from Coxiella burnetii (strain Dugway 5J108-111).